A 300-amino-acid polypeptide reads, in one-letter code: Fatty acid elongase 3 (300 aa).

Transmembrane regions (helical) follow at residues 31–51 (VPAV…ENVM), 61–81 (FLNM…AYYC), and 127–147 (IFFD…KIPE). Residues 165–169 (HWYHH) carry the HxxHH motif motif. His-168 (nucleophile) is an active-site residue. Transmembrane regions (helical) follow at residues 170 to 190 (ATVM…GLWF), 192 to 212 (TMNY…ACGM), 219 to 239 (IAPL…LIVL), and 261 to 283 (MGLL…SYIS).

This sequence belongs to the ELO family.

It localises to the endoplasmic reticulum membrane. The enzyme catalyses an acyl-CoA + malonyl-CoA + H(+) = a 3-oxoacyl-CoA + CO2 + CoA. It functions in the pathway lipid metabolism; fatty acid biosynthesis. In terms of biological role, involved in the synthesis of fatty acids. Elongates C14 fatty acids to C18. Required for the maintenance of the global lipidome profile in this parasite. The polypeptide is Fatty acid elongase 3 (Trypanosoma cruzi (strain CL Brener)).